The chain runs to 267 residues: Indole-3-glycerol phosphate synthase (267 aa).

The protein belongs to the TrpC family.

The catalysed reaction is 1-(2-carboxyphenylamino)-1-deoxy-D-ribulose 5-phosphate + H(+) = (1S,2R)-1-C-(indol-3-yl)glycerol 3-phosphate + CO2 + H2O. It functions in the pathway amino-acid biosynthesis; L-tryptophan biosynthesis; L-tryptophan from chorismate: step 4/5. In Ralstonia pickettii (strain 12J), this protein is Indole-3-glycerol phosphate synthase.